The following is a 180-amino-acid chain: Urease accessory protein UreE (180 aa).

Residues 71–90 form a disordered region; it reads AAPSGAGHGDGEQDGTGAPG.

It belongs to the UreE family.

The protein resides in the cytoplasm. Functionally, involved in urease metallocenter assembly. Binds nickel. Probably functions as a nickel donor during metallocenter assembly. This Kocuria rhizophila (strain ATCC 9341 / DSM 348 / NBRC 103217 / DC2201) protein is Urease accessory protein UreE.